Here is a 727-residue protein sequence, read N- to C-terminus: Kinesin-like protein KIN-14G (727 aa).

3 disordered regions span residues 100 to 156, 172 to 194, and 336 to 357; these read QTAP…LHLR, HLSAPSRSPTPPPNAVAPSSCSR, and LAGGARSGRRDNPRRQGTGATR. Residues 114–133 show a composition bias toward polar residues; it reads VASSTAGRASRTKSASSTGR. The region spanning 381–710 is the Kinesin motor domain; the sequence is NIRVFCRVRP…LRFAARVNSC (330 aa). 461-468 contacts ATP; the sequence is GQTGSGKT.

It belongs to the TRAFAC class myosin-kinesin ATPase superfamily. Kinesin family. KIN-14 subfamily.

The chain is Kinesin-like protein KIN-14G from Oryza sativa subsp. japonica (Rice).